The sequence spans 492 residues: Trigger factor (492 aa).

The PPIase FKBP-type domain maps to 169–254 (GDRVSIDYVG…VKEVSKPGEL (86 aa)). Residues 441-492 (LMADDEDAETTTKAKPAKKAAAKKAEAKANEDEAEEPKKKAAPKKKAAKDAE) are disordered. The segment covering 463–479 (KKAEAKANEDEAEEPKK) has biased composition (basic and acidic residues). The span at 480-492 (KAAPKKKAAKDAE) shows a compositional bias: basic residues.

It belongs to the FKBP-type PPIase family. Tig subfamily.

It is found in the cytoplasm. The enzyme catalyses [protein]-peptidylproline (omega=180) = [protein]-peptidylproline (omega=0). In terms of biological role, involved in protein export. Acts as a chaperone by maintaining the newly synthesized protein in an open conformation. Functions as a peptidyl-prolyl cis-trans isomerase. The chain is Trigger factor from Mesorhizobium japonicum (strain LMG 29417 / CECT 9101 / MAFF 303099) (Mesorhizobium loti (strain MAFF 303099)).